Here is a 201-residue protein sequence, read N- to C-terminus: Small ribosomal subunit protein uS4 (201 aa).

The interval 27–47 (SKKNYPPGQHGNSRKRKTSEY) is disordered. The S4 RNA-binding domain occupies 92–152 (GRLDNVVYRL…EKSKSMEVIA (61 aa)).

Belongs to the universal ribosomal protein uS4 family. In terms of assembly, part of the 30S ribosomal subunit. Contacts protein S5. The interaction surface between S4 and S5 is involved in control of translational fidelity.

One of the primary rRNA binding proteins, it binds directly to 16S rRNA where it nucleates assembly of the body of the 30S subunit. In terms of biological role, with S5 and S12 plays an important role in translational accuracy. The chain is Small ribosomal subunit protein uS4 from Parabacteroides distasonis (strain ATCC 8503 / DSM 20701 / CIP 104284 / JCM 5825 / NCTC 11152).